The sequence spans 821 residues: DNA ligase (821 aa).

Residues 33–37, 82–83, and Glu-113 contribute to the NAD(+) site; these read DVDYD and SL. Residue Lys-115 is the N6-AMP-lysine intermediate of the active site. NAD(+) is bound by residues Arg-136, Glu-173, Lys-290, and Lys-314. Residues Cys-408, Cys-411, Cys-426, and Cys-432 each contribute to the Zn(2+) site. One can recognise a BRCT domain in the interval 741-821; it reads IVAGPLDGQT…RLLAYLAEHE (81 aa).

The protein belongs to the NAD-dependent DNA ligase family. LigA subfamily. Mg(2+) is required as a cofactor. It depends on Mn(2+) as a cofactor.

The catalysed reaction is NAD(+) + (deoxyribonucleotide)n-3'-hydroxyl + 5'-phospho-(deoxyribonucleotide)m = (deoxyribonucleotide)n+m + AMP + beta-nicotinamide D-nucleotide.. Functionally, DNA ligase that catalyzes the formation of phosphodiester linkages between 5'-phosphoryl and 3'-hydroxyl groups in double-stranded DNA using NAD as a coenzyme and as the energy source for the reaction. It is essential for DNA replication and repair of damaged DNA. The polypeptide is DNA ligase (Stenotrophomonas maltophilia (strain R551-3)).